The sequence spans 473 residues: Gamma-aminobutyric acid receptor subunit beta-3 (473 aa).

The N-terminal stretch at 1 to 25 (MWGFAGGRLFGIFSAPVLVAVVCCA) is a signal peptide. The Extracellular segment spans residues 26–246 (QSVNDPGNMS…FRLKRNIGYF (221 aa)). Residues asparagine 33 and asparagine 105 are each glycosylated (N-linked (GlcNAc...) asparagine). Residue tyrosine 122 participates in histamine binding. A disulfide bond links cysteine 161 and cysteine 175. Asparagine 174 is a glycosylation site (N-linked (GlcNAc...) asparagine). Residues glutamate 180, tyrosine 182, and threonine 227 each coordinate 4-aminobutanoate. Histamine-binding positions include 181 to 182 (SY) and threonine 227. A helical membrane pass occupies residues 247-267 (ILQTYMPSILITILSWVSFWI). Over 268–271 (NYDA) the chain is Cytoplasmic. The helical transmembrane segment at 272–292 (SAARVALGITTVLTMTTINTH) threads the bilayer. The Extracellular segment spans residues 293–304 (LRETLPKIPYVK). Residues 305 to 328 (AIDMYLMGCFVFVFLALLEYAFVN) traverse the membrane as a helical segment. The Cytoplasmic segment spans residues 329–447 (YIFFGRGPQR…KIPDLTDVNA (119 aa)). Residues 448 to 470 (IDRWSRIVFPFTFSLFNLVYWLY) form a helical membrane-spanning segment. Residues 471-473 (YVN) are Extracellular-facing.

It belongs to the ligand-gated ion channel (TC 1.A.9) family. Gamma-aminobutyric acid receptor (TC 1.A.9.5) subfamily. GABRB3 sub-subfamily. As to quaternary structure, heteropentamer, formed by a combination of alpha (GABRA1-6), beta (GABRB1-3), gamma (GABRG1-3), delta (GABRD), epsilon (GABRE), rho (GABRR1-3), pi (GABRP) and theta (GABRQ) chains, each subunit exhibiting distinct physiological and pharmacological properties. Can form functional homopentamers (in vitro). Interacts with UBQLN1. May interact with KIF21B. Identified in a complex of 720 kDa composed of LHFPL4, NLGN2, GABRA1, GABRB2, GABRG2 and GABRB3. Interacts with LHFPL4. Interacts with GIT1; this interaction is required for synaptic GABRB3 surface stability and inhibitory synapse strength.

It localises to the postsynaptic cell membrane. Its subcellular location is the cell membrane. The protein localises to the cytoplasmic vesicle membrane. The catalysed reaction is chloride(in) = chloride(out). Potentiated by histamine. Functionally, beta subunit of the heteropentameric ligand-gated chloride channel gated by gamma-aminobutyric acid (GABA), a major inhibitory neurotransmitter in the brain. GABA-gated chloride channels, also named GABA(A) receptors (GABAAR), consist of five subunits arranged around a central pore and contain GABA active binding site(s) located at the alpha and beta subunit interface(s). GABAARs containing beta-3/GABRB3 subunit are found at both synaptic and extrasynaptic sites. When activated by GABA, GABAARs selectively allow the flow of chloride anions across the cell membrane down their electrochemical gradient. Chloride influx into the postsynaptic neuron following GABAAR opening decreases the neuron ability to generate a new action potential, thereby reducing nerve transmission. GABAARs containing alpha-1 and beta-3 subunits exhibit synaptogenic activity; the gamma-2 subunit being necessary but not sufficient to induce rapid synaptic contacts formation. Extrasynaptic beta-3 receptors contribute to the tonic GABAergic inhibition. GABAARs containing alpha-1, beta-3 and epsilon subunits may permit spontaneous chloride channel activity while preserving the structural information required for GABA-gated openings. Beta-containing GABAARs can simultaneously bind GABA and histamine where histamine binds at the interface of two neighboring beta subunits, which may be involved in the regulation of sleep and wakefulness. Plays an important role in somatosensation and in the production of antinociception. The protein is Gamma-aminobutyric acid receptor subunit beta-3 of Mus musculus (Mouse).